The chain runs to 319 residues: HPr kinase/phosphorylase (319 aa).

Catalysis depends on residues histidine 137 and lysine 158. ATP is bound at residue 152-159 (GDSGVGKS). Serine 159 is a binding site for Mg(2+). Aspartate 176 functions as the Proton acceptor; for phosphorylation activity. Proton donor; for dephosphorylation activity in the catalytic mechanism. Positions 201-210 (MEIRGLGIIN) are important for the catalytic mechanism of both phosphorylation and dephosphorylation. Glutamate 202 provides a ligand contact to Mg(2+). Residue arginine 243 is part of the active site. Positions 264–269 (PVRPGR) are important for the catalytic mechanism of dephosphorylation.

It belongs to the HPrK/P family. Homohexamer. It depends on Mg(2+) as a cofactor.

It catalyses the reaction [HPr protein]-L-serine + ATP = [HPr protein]-O-phospho-L-serine + ADP + H(+). The enzyme catalyses [HPr protein]-O-phospho-L-serine + phosphate + H(+) = [HPr protein]-L-serine + diphosphate. Catalyzes the ATP- as well as the pyrophosphate-dependent phosphorylation of a specific serine residue in HPr, a phosphocarrier protein of the phosphoenolpyruvate-dependent sugar phosphotransferase system (PTS). HprK/P also catalyzes the pyrophosphate-producing, inorganic phosphate-dependent dephosphorylation (phosphorolysis) of seryl-phosphorylated HPr (P-Ser-HPr). This is HPr kinase/phosphorylase from Treponema pallidum subsp. pallidum (strain SS14).